The sequence spans 299 residues: Bifunctional protein FolD (299 aa).

Residues 168–170 (GRS), serine 193, and isoleucine 234 contribute to the NADP(+) site.

This sequence belongs to the tetrahydrofolate dehydrogenase/cyclohydrolase family. In terms of assembly, homodimer.

It catalyses the reaction (6R)-5,10-methylene-5,6,7,8-tetrahydrofolate + NADP(+) = (6R)-5,10-methenyltetrahydrofolate + NADPH. The enzyme catalyses (6R)-5,10-methenyltetrahydrofolate + H2O = (6R)-10-formyltetrahydrofolate + H(+). It participates in one-carbon metabolism; tetrahydrofolate interconversion. Functionally, catalyzes the oxidation of 5,10-methylenetetrahydrofolate to 5,10-methenyltetrahydrofolate and then the hydrolysis of 5,10-methenyltetrahydrofolate to 10-formyltetrahydrofolate. In Brucella anthropi (strain ATCC 49188 / DSM 6882 / CCUG 24695 / JCM 21032 / LMG 3331 / NBRC 15819 / NCTC 12168 / Alc 37) (Ochrobactrum anthropi), this protein is Bifunctional protein FolD.